The primary structure comprises 264 residues: tRNA (guanine-N(1)-)-methyltransferase (264 aa).

S-adenosyl-L-methionine is bound by residues glycine 125 and 145–150 (LGDFVL).

It belongs to the RNA methyltransferase TrmD family. Homodimer.

The protein resides in the cytoplasm. The catalysed reaction is guanosine(37) in tRNA + S-adenosyl-L-methionine = N(1)-methylguanosine(37) in tRNA + S-adenosyl-L-homocysteine + H(+). Its function is as follows. Specifically methylates guanosine-37 in various tRNAs. This chain is tRNA (guanine-N(1)-)-methyltransferase, found in Burkholderia ambifaria (strain ATCC BAA-244 / DSM 16087 / CCUG 44356 / LMG 19182 / AMMD) (Burkholderia cepacia (strain AMMD)).